A 656-amino-acid polypeptide reads, in one-letter code: MHPASVTTTSQDPCAPSGSCRGGRRRRPISVIGGVSFYGNTQVEDVENLLVQPAARPPVPAHQVPPYKAVSARLRPFTFSQSTPIGLDRVGRRRQMKTSNVSSDGGAESSALVDDNGSEEDFSYEELCQANPRYLQPGGEQLAINELISDGSVVCAEALWDHVTMDDQELGFKAGDVIQVLEASNKDWWWGRNEDKEAWFPASFVRLRVNQEELPENCSSSHGEEQDEDTSKARHKHPESQQQMRTNVIQEIMNTERVYIKHLKDICEGYIRQCRKHTGMFTVAQLATIFGNIEDIYKFQRKFLKDLEKQYNKEEPHLSEIGSCFLEHQEGFAIYSEYCNNHPGACVELSNLMKHSKYRHFFEACRLLQQMIDIALDGFLLTPVQKICKYPLQLAELLKYTTQEHGDYNNIKAAYEAMKNVACLINERKRKLESIDKIARWQVSIVGWEGLDILDRSSELIHSGELTKITRQGKSQQRIFFLFDHQLVSCKKDLLRRDMLYYKGRMDMDEVELVDVEDGRDKDWSLSLRNAFKLVSKATDEVHLFCARKQEDKARWLQAYADERRRVQEDQQMGMEIPENQKKLAMLNAQKAGHGKSKGYNSCPVAPPHQSLPPLHQRHITVPTSIPQQQVFALAEPKRKPSIFWHTFHKLTPFRK.

Residues 1–12 (MHPASVTTTSQD) show a composition bias toward polar residues. Residues 1-26 (MHPASVTTTSQDPCAPSGSCRGGRRR) form a disordered region. Serine 82 carries the phosphoserine modification. The disordered stretch occupies residues 85–115 (IGLDRVGRRRQMKTSNVSSDGGAESSALVDD). The segment at 102-154 (SSDGGAESSALVDDNGSEEDFSYEELCQANPRYLQPGGEQLAINELISDGSVV) is ABR (APC-binding region) domain. Serine 118 bears the Phosphoserine mark. Residues 151–210 (GSVVCAEALWDHVTMDDQELGFKAGDVIQVLEASNKDWWWGRNEDKEAWFPASFVRLRVN) form the SH3 domain. The segment at 215–242 (PENCSSSHGEEQDEDTSKARHKHPESQQ) is disordered. A DH domain is found at 244–428 (MRTNVIQEIM…KNVACLINER (185 aa)). Residues 459–565 (ELIHSGELTK…WLQAYADERR (107 aa)) enclose the PH domain. Residues 565-656 (RRVQEDQQMG…TFHKLTPFRK (92 aa)) are C-terminal tail.

As to quaternary structure, interacts (via ABR and SH3 domain) with APC. The binding of APC enhances its GEF activity by relieving it from an autoinhibitory conformation, in which the ABR and SH3 domains are associated with the C-terminal tail. Interacts (via C-terminal tail) with PPP1R9B (via C-terminus). Interacts with RAC1. As to expression, expression is aberrantly enhanced in most colorectal tumors.

It is found in the cytoplasm. Its subcellular location is the cell projection. It localises to the filopodium. The protein resides in the lamellipodium. The protein localises to the ruffle membrane. It is found in the podosome. Its activity is regulated as follows. Both the ABR and the SH3 domains contribute to maintaining the protein in an inhibited conformation by associating with the C-terminal tail. Binding of these domains to the C-terminal tail inhibits the activity of the protein by blocking a region that is required for its GEF activity. In terms of biological role, acts as a guanine nucleotide exchange factor (GEF) for RHOA, RAC1 and CDC42 GTPases. Regulates cell migration and adhesion assembly and disassembly through a RAC1, PI3K, RHOA and AKT1-dependent mechanism. Increases both RAC1 and CDC42 activity, but decreases the amount of active RHOA. Required for MMP9 up-regulation via the JNK signaling pathway in colorectal tumor cells. Involved in tumor angiogenesis and may play a role in intestinal adenoma formation and tumor progression. This Mus musculus (Mouse) protein is Spermatogenesis-associated protein 13 (Spata13).